The following is a 101-amino-acid chain: Putative regulatory protein Csac_2087 (101 aa).

Belongs to the RemA family.

The sequence is that of Putative regulatory protein Csac_2087 from Caldicellulosiruptor saccharolyticus (strain ATCC 43494 / DSM 8903 / Tp8T 6331).